The following is a 153-amino-acid chain: Melatonin receptor type 1A X2.0 (153 aa).

Over 1–12 the chain is Cytoplasmic; that stretch reads HSSWYNRLFSNS. The chain crosses the membrane as a helical span at residues 13-33; sequence GTICYVGLVWVLALGAILPNL. Residues 34 to 57 are Extracellular-facing; that stretch reads FVGSLRCDPRIFSCTFAQYVSSYY. Residues 58-78 traverse the membrane as a helical segment; sequence TIAVVIFHFFLPIGVVSYCYL. Topologically, residues 79–112 are cytoplasmic; it reads RIWVLVLNIRHRVKPDRHLHHQTWPYNIHGFITM. A helical membrane pass occupies residues 113 to 133; sequence FVVFVLFAVCWGPLNIIGLTV. At 134-145 the chain is on the extracellular side; the sequence is AIYPPLGDSIPQ. A helical transmembrane segment spans residues 146 to 153; it reads WLFVASYF.

This sequence belongs to the G-protein coupled receptor 1 family.

The protein localises to the cell membrane. Its function is as follows. High affinity receptor for melatonin. The activity of this receptor is mediated by pertussis toxin sensitive G proteins that inhibits adenylate cyclase activity. This chain is Melatonin receptor type 1A X2.0, found in Xenopus laevis (African clawed frog).